The primary structure comprises 512 residues: Endoglucanase 14 (512 aa).

The signal sequence occupies residues 1 to 22 (MLAAAIELVVIATSCMVRDAHG). Asparagine 76 carries an N-linked (GlcNAc...) asparagine glycan. Residue aspartate 103 is the Nucleophile of the active site. Asparagine 192 and asparagine 215 each carry an N-linked (GlcNAc...) asparagine glycan. Catalysis depends on residues histidine 433, aspartate 484, and glutamate 493.

It belongs to the glycosyl hydrolase 9 (cellulase E) family.

It is found in the secreted. The catalysed reaction is Endohydrolysis of (1-&gt;4)-beta-D-glucosidic linkages in cellulose, lichenin and cereal beta-D-glucans.. This chain is Endoglucanase 14, found in Oryza sativa subsp. japonica (Rice).